The primary structure comprises 599 residues: Beta-glucuronidase (599 aa).

Asp160 and Asn407 together coordinate D-glucuronate. The active-site Proton donor is Glu408. Positions 462, 468, 501, 546, and 565 each coordinate D-glucuronate. Residue Glu501 is the Nucleophile of the active site. Positions Asn563–Lys565 match the N-K motif motif.

This sequence belongs to the glycosyl hydrolase 2 family.

It catalyses the reaction a beta-D-glucuronoside + H2O = D-glucuronate + an alcohol. Its activity is regulated as follows. Inhibited by a set of synthetic compounds like thio-urea derivatives and analogs. Inhibitors of gut microbial beta-glucuronidases are expected to block the reactivation of glucuronidated cancer drugs, and to alleviate drug-induced GI toxicity. Its function is as follows. Displays beta-glucuronidase activity with the artificial substrate p-nitrophenyl-beta-D-glucuronide (PNPG). Is likely capable of scavenging glucuronate from a range of chemically distinct xenobiotic and endobiotic glucuronides present in the gastrointestinal (GI) tract, to be able to utilize these diverse sources of carbon. As part of the GI microbiome, this enzyme would be able to reactivate glucuronide drug conjugates, such reactivated compounds can significantly damage the GI tract. In Streptococcus agalactiae serotype V (strain ATCC BAA-611 / 2603 V/R), this protein is Beta-glucuronidase.